The chain runs to 282 residues: Shikimate dehydrogenase (NADP(+)) (282 aa).

Shikimate-binding positions include 18–20 and threonine 65; that span reads SRS. Lysine 69 (proton acceptor) is an active-site residue. Asparagine 90 and aspartate 106 together coordinate shikimate. Residues 134–138, 158–163, and isoleucine 223 each bind NADP(+); these read GAGGA and NRTAAR. Position 225 (tyrosine 225) interacts with shikimate. Residue glycine 246 coordinates NADP(+).

The protein belongs to the shikimate dehydrogenase family. As to quaternary structure, homodimer.

The catalysed reaction is shikimate + NADP(+) = 3-dehydroshikimate + NADPH + H(+). The protein operates within metabolic intermediate biosynthesis; chorismate biosynthesis; chorismate from D-erythrose 4-phosphate and phosphoenolpyruvate: step 4/7. In terms of biological role, involved in the biosynthesis of the chorismate, which leads to the biosynthesis of aromatic amino acids. Catalyzes the reversible NADPH linked reduction of 3-dehydroshikimate (DHSA) to yield shikimate (SA). The chain is Shikimate dehydrogenase (NADP(+)) from Methylobacterium radiotolerans (strain ATCC 27329 / DSM 1819 / JCM 2831 / NBRC 15690 / NCIMB 10815 / 0-1).